A 607-amino-acid chain; its full sequence is Cytosolic Fe-S cluster assembly factor nar1 (607 aa).

Cysteine 20 is a [4Fe-4S] cluster binding site. Residues 28–47 (PKNESSNSQNPYEVTTEDKV) are disordered. The span at 29 to 40 (KNESSNSQNPYE) shows a compositional bias: polar residues. [4Fe-4S] cluster is bound by residues cysteine 62, cysteine 65, cysteine 68, cysteine 214, and cysteine 269. Residues 439 to 461 (ARVPAASAGGNRRQPISRNSASA) form a disordered region. Over residues 452–461 (QPISRNSASA) the composition is skewed to polar residues. 2 residues coordinate [4Fe-4S] cluster: cysteine 475 and cysteine 479. Polar residues predominate over residues 494-505 (ASTSTQSVTAVE). Residues 494–513 (ASTSTQSVTAVENPSKPTPH) form a disordered region.

This sequence belongs to the NARF family.

Component of the cytosolic Fe/S protein assembly machinery. Required for maturation of extramitochondrial Fe/S proteins. May play a role in the transfer of pre-assembled Fe/S clusters to target apoproteins. This is Cytosolic Fe-S cluster assembly factor nar1 (nar1) from Aspergillus oryzae (strain ATCC 42149 / RIB 40) (Yellow koji mold).